The sequence spans 86 residues: Teretoxin Tsu6.16 (86 aa).

An N-terminal signal peptide occupies residues 1–21 (MATSGRLLCVCLVMGLVFESL). Positions 22–46 (GYLTGREKRPAENLEASVQRRWYLN) are excised as a propeptide.

It belongs to the teretoxin M (TM) superfamily. Post-translationally, contains 3 disulfide bonds. Expressed by the venom duct.

The protein localises to the secreted. The polypeptide is Teretoxin Tsu6.16 (Terebra subulata (Chocolate spotted auger)).